A 103-amino-acid polypeptide reads, in one-letter code: Small ribosomal subunit protein uS10 (103 aa).

Belongs to the universal ribosomal protein uS10 family. As to quaternary structure, part of the 30S ribosomal subunit.

Involved in the binding of tRNA to the ribosomes. This Leptothrix cholodnii (strain ATCC 51168 / LMG 8142 / SP-6) (Leptothrix discophora (strain SP-6)) protein is Small ribosomal subunit protein uS10.